Reading from the N-terminus, the 202-residue chain is Oxopyrrolidines biosynthesis cluster protein O (202 aa).

Its function is as follows. Part of the gene cluster that mediates the biosynthesis of oxopyrrolidines, polyketide-amino acid hybrid compounds with feature structures of tetramic acid. Does not seem to play a role in oxopyrrolidines A and B biosynthesis. The polypeptide is Oxopyrrolidines biosynthesis cluster protein O (Penicillium oxalicum (strain 114-2 / CGMCC 5302) (Penicillium decumbens)).